The following is a 671-amino-acid chain: MAESLEEAKQEVRQLRAQLDQWAKAYYEQDAPVVEDHVYDEKYARLLELEAAYPELKSADSITQRVGGEVNSDLPKVEHPVPMLSMGDVFSKEELAEFDQRVQKAIGHPVAYNVELKIDGLSLSLEYEEGCLKRASTRGNGQVGEDVTKNVKYIKDVPQKLPKAITTEVRGECYMSKEAFAKLNQERDEAGESIFANPRNAAAGSLRQLDPKVTKKRQLSTFIYTWINPPAGIDSQHQAICEMAKLGFHTNENGRRLENLADVYDYIDEFTKKRDSLPYVIDGIVLKVDDLALQADLGNTVKVPRWEIAYKFPPEEEETVVREIEWTVGRTGVVTPTAVMDPVRLAGSTVARASLHNPDLLAKLDVRLGDTVKLHKAGDIIPEISEVVLSKRPEDSVPYEVPTKCPSCGEDLVHLDEEVALRCINPSCPAQVEEGITHFASRQAMNIAGLGPKIVKQLIAKDLVHNVADLYYLTADDLSQLDHFKEKSINNLLVAIDQSRKNSVELVLFGLGIDNVGGKAAQLIARKFKNMSKIASASVQELTAIDTIGMTIAESLTAYFQQEEAKKLLARLEEAGVNMDYLGEDGEAADNFFKGKTVVLTGKLAHYSRAEFTKKLQALGAKVTGSVSKKTNCLVYGEDAGSKLAKAEALDIPRLTEAEAISKIEEKDTEK.

Residues 36 to 40 (DHVYD), 85 to 86 (SM), and Glu115 each bind NAD(+). Lys117 acts as the N6-AMP-lysine intermediate in catalysis. Residues Arg138, Glu172, Lys287, and Lys311 each contribute to the NAD(+) site. Positions 405, 408, 423, and 428 each coordinate Zn(2+). The BRCT domain maps to 588–671 (AADNFFKGKT…SKIEEKDTEK (84 aa)).

Belongs to the NAD-dependent DNA ligase family. LigA subfamily. Mg(2+) serves as cofactor. It depends on Mn(2+) as a cofactor.

It carries out the reaction NAD(+) + (deoxyribonucleotide)n-3'-hydroxyl + 5'-phospho-(deoxyribonucleotide)m = (deoxyribonucleotide)n+m + AMP + beta-nicotinamide D-nucleotide.. DNA ligase that catalyzes the formation of phosphodiester linkages between 5'-phosphoryl and 3'-hydroxyl groups in double-stranded DNA using NAD as a coenzyme and as the energy source for the reaction. It is essential for DNA replication and repair of damaged DNA. This chain is DNA ligase, found in Lactobacillus delbrueckii subsp. bulgaricus (strain ATCC 11842 / DSM 20081 / BCRC 10696 / JCM 1002 / NBRC 13953 / NCIMB 11778 / NCTC 12712 / WDCM 00102 / Lb 14).